The sequence spans 95 residues: Aspartyl/glutamyl-tRNA(Asn/Gln) amidotransferase subunit C (95 aa).

The protein belongs to the GatC family. As to quaternary structure, heterotrimer of A, B and C subunits.

The enzyme catalyses L-glutamyl-tRNA(Gln) + L-glutamine + ATP + H2O = L-glutaminyl-tRNA(Gln) + L-glutamate + ADP + phosphate + H(+). The catalysed reaction is L-aspartyl-tRNA(Asn) + L-glutamine + ATP + H2O = L-asparaginyl-tRNA(Asn) + L-glutamate + ADP + phosphate + 2 H(+). In terms of biological role, allows the formation of correctly charged Asn-tRNA(Asn) or Gln-tRNA(Gln) through the transamidation of misacylated Asp-tRNA(Asn) or Glu-tRNA(Gln) in organisms which lack either or both of asparaginyl-tRNA or glutaminyl-tRNA synthetases. The reaction takes place in the presence of glutamine and ATP through an activated phospho-Asp-tRNA(Asn) or phospho-Glu-tRNA(Gln). The sequence is that of Aspartyl/glutamyl-tRNA(Asn/Gln) amidotransferase subunit C from Dechloromonas aromatica (strain RCB).